A 215-amino-acid chain; its full sequence is Cytokinin riboside 5'-monophosphate phosphoribohydrolase LOG4 (215 aa).

Residues Glu84, 102 to 103, 119 to 125, and Thr131 each bind substrate; these read RK and GYGTLEE.

This sequence belongs to the LOG family. In terms of tissue distribution, expressed in roots and shoots. Detected in root procambium, lateral root primordia, vascular tissues of cotyledons, leaves and stems, shoot apical meristem, axillary buds, young inflorescences, fruit abscission zones and basal part of ovules.

It localises to the cytoplasm. It is found in the nucleus. The catalysed reaction is N(6)-(dimethylallyl)adenosine 5'-phosphate + H2O = N(6)-dimethylallyladenine + D-ribose 5-phosphate. It catalyses the reaction 9-ribosyl-trans-zeatin 5'-phosphate + H2O = trans-zeatin + D-ribose 5-phosphate. Its function is as follows. Cytokinin-activating enzyme working in the direct activation pathway. Phosphoribohydrolase that converts inactive cytokinin nucleotides to the biologically active free-base forms. This is Cytokinin riboside 5'-monophosphate phosphoribohydrolase LOG4 (LOG4) from Arabidopsis thaliana (Mouse-ear cress).